Consider the following 439-residue polypeptide: MTSEHTMLTGVTDGFFCCLLGTPPNAVRPLESVESSDGYTFVEVKPGRVLRVKHAGPAPIPTPPPPPPEDDPGVKTGLVRCQRRITVYRNGRLVVENLGRAPRADLQGRSGSGDPPAALEVELAEPAGGDTRANPGSGRRRRPRRPKRTIHIDCEQRITSCKGAQADVVLFFIHGVGGSLAIWKEQLDFFVRLGYEVVAPDLAGHGASSAPQVAAAYTFYALAEDMRAIFTRYAKKRNVLIGHSYGVSFCTFLAHEYPDLVHKVIMINGGGPTALEPSLCSIFNMPTCVLHCLSPCLAWSFLKAGFARQGAKEKQLLKEGNAFNVSSFVLRAMMSGQYWPEGDEVYHAELTVPVLLVHGMHDKFVPVEEDQRMAEILLLAFLKLIEEGSHMVMLECPETVNTLLHEFLLWEPEPEAEPKLEPKPKPQLLQPEPAPGEEK.

2 disordered regions span residues 54-75 and 122-148; these read HAGP…PGVK and ELAE…RPKR. The segment covering 58 to 67 has biased composition (pro residues); sequence APIPTPPPPP. The segment covering 138–148 has biased composition (basic residues); sequence GRRRRPRRPKR. The AB hydrolase-1 domain occupies 169–271; sequence VLFFIHGVGG…HKVIMINGGG (103 aa). Catalysis depends on charge relay system residues serine 244, aspartate 362, and histidine 390. The tract at residues 415–439 is disordered; it reads EAEPKLEPKPKPQLLQPEPAPGEEK.

The protein belongs to the AB hydrolase superfamily. Interacts with NLRP3 (via NACHT and LLR domains); this interaction is enhanced in the presence of NLRP3 inflammasome inducers, such as ATP, nigericin, silica, or alum. Interacts with ZDHHC12.

It localises to the cytoplasm. Negatively regulates NLRP3-driven inflammation. Promotes NLRP3 degradation through the chaperone-mediated autophagy (CMA) pathway, hence attenuating inflammasome activation and IL1B secretion. Acts by recruiting palmitoyltransferase ZDHHC12 to NLRP3, facilitating NLRP3 palmitoylation and subsequent degradation. This chain is Protein ABHD8, found in Mus musculus (Mouse).